Consider the following 431-residue polypeptide: Chaperone SurA (431 aa).

A signal peptide spans 1–22 (MKLWKPTLISVLSALTLFNAHA). PpiC domains are found at residues 173-271 (TVQY…KIDD) and 280-380 (VTEV…EVLD).

The protein localises to the periplasm. It catalyses the reaction [protein]-peptidylproline (omega=180) = [protein]-peptidylproline (omega=0). Functionally, chaperone involved in the correct folding and assembly of outer membrane proteins. Recognizes specific patterns of aromatic residues and the orientation of their side chains, which are found more frequently in integral outer membrane proteins. May act in both early periplasmic and late outer membrane-associated steps of protein maturation. This Vibrio cholerae serotype O1 (strain ATCC 39315 / El Tor Inaba N16961) protein is Chaperone SurA.